A 56-amino-acid chain; its full sequence is Arcadin-3 (56 aa).

It is found in the cytoplasm. Its subcellular location is the cytoskeleton. Functionally, part of an actin-like archaeal cytoskeleton. The sequence is that of Arcadin-3 from Pyrobaculum calidifontis (strain DSM 21063 / JCM 11548 / VA1).